Consider the following 112-residue polypeptide: Large ribosomal subunit protein mL53 (112 aa).

Belongs to the mitochondrion-specific ribosomal protein mL53 family. In terms of assembly, component of the mitochondrial large ribosomal subunit (mt-LSU). Mature mammalian 55S mitochondrial ribosomes consist of a small (28S) and a large (39S) subunit. The 28S small subunit contains a 12S ribosomal RNA (12S mt-rRNA) and 30 different proteins. The 39S large subunit contains a 16S rRNA (16S mt-rRNA), a copy of mitochondrial valine transfer RNA (mt-tRNA(Val)), which plays an integral structural role, and 52 different proteins. mL53 is located at the L7/L12 stalk.

The protein resides in the mitochondrion. The protein is Large ribosomal subunit protein mL53 (MRPL53) of Homo sapiens (Human).